A 391-amino-acid chain; its full sequence is uncharacterized protein (391 aa).

This is an uncharacterized protein from Sinorhizobium fredii (strain NBRC 101917 / NGR234).